We begin with the raw amino-acid sequence, 543 residues long: Ribonuclease Y (543 aa).

A helical transmembrane segment spans residues 4–24; that stretch reads IIMIPVATAIVSLLVGTVTGY. A KH domain is found at 233-296; that stretch reads TVSVVDLPNE…EIAKRAMERL (64 aa). An HD domain is found at 359 to 452; the sequence is VLSHSIEVGK…VVAADTISSA (94 aa).

Belongs to the RNase Y family.

It is found in the cell membrane. Endoribonuclease that initiates mRNA decay. This is Ribonuclease Y from Lactobacillus acidophilus (strain ATCC 700396 / NCK56 / N2 / NCFM).